Consider the following 260-residue polypeptide: Salicylic acid-binding protein 2 (260 aa).

3 residues coordinate salicylate: Ala-13, Ser-81, and Lys-159. Ser-81 serves as the catalytic Acyl-ester intermediate. Catalysis depends on charge relay system residues Asp-210 and His-238. Salicylate is bound by residues His-238, Leu-253, and His-257.

The protein belongs to the AB hydrolase superfamily. Methylesterase family.

It catalyses the reaction methyl salicylate + H2O = salicylate + methanol + H(+). Its pathway is plant hormone biosynthesis. With respect to regulation, esterase activity is down-regulated by salicylic acid (SA) or by tetraFA, a synthetic SA analog. Functionally, required to convert methyl salicylate (MeSA) to salicylic acid (SA) as part of the signal transduction pathways that activate systemic acquired resistance in systemic tissue. MeSA is believed to be an inactive form that needs to be demethylated to exert a biological effect. Also able to catalyze the conversion of acibenzolar-S-methyl into acibenzolar to induce systemic acquired resistance. The sequence is that of Salicylic acid-binding protein 2 from Nicotiana tabacum (Common tobacco).